Consider the following 73-residue polypeptide: Small, acid-soluble spore protein C2 (73 aa).

The protein belongs to the alpha/beta-type SASP family.

Functionally, SASP are bound to spore DNA. They are double-stranded DNA-binding proteins that cause DNA to change to an a-like conformation. They protect the DNA backbone from chemical and enzymatic cleavage and are thus involved in dormant spore's high resistance to UV light. This chain is Small, acid-soluble spore protein C2 (SASP-C2), found in Priestia megaterium (Bacillus megaterium).